The following is a 422-amino-acid chain: Monoacylglycerol lipase ABHD2 (422 aa).

Residues 1-15 (MSAQLEADVRTMSPE) are Cytoplasmic-facing. Residues 16–36 (MPAMFDGMKLAAVAAVLYVIV) form a helical; Signal-anchor for type II membrane protein membrane-spanning segment. The Extracellular segment spans residues 37 to 422 (RSLNLKCPTA…HKPQCHQQKE (386 aa)). The region spanning 134–385 (MVICPGIGNH…HGGHLGFFEG (252 aa)) is the AB hydrolase-1 domain. N-linked (GlcNAc...) asparagine glycosylation occurs at Asn142. The Nucleophile role is filled by Ser213. 3 N-linked (GlcNAc...) asparagine glycosylation sites follow: Asn285, Asn335, and Asn344. Residues Asp348 and His379 each act as charge relay system in the active site.

Belongs to the AB hydrolase superfamily. AB hydrolase 4 family.

The protein resides in the cell membrane. The enzyme catalyses Hydrolyzes glycerol monoesters of long-chain fatty acids.. It catalyses the reaction an acetyl ester + H2O = an aliphatic alcohol + acetate + H(+). The catalysed reaction is a triacylglycerol + H2O = a diacylglycerol + a fatty acid + H(+). It carries out the reaction 2-(5Z,8Z,11Z,14Z-eicosatetraenoyl)-glycerol + H2O = glycerol + (5Z,8Z,11Z,14Z)-eicosatetraenoate + H(+). The enzyme catalyses a butanoate ester + H2O = an aliphatic alcohol + butanoate + H(+). It catalyses the reaction hexadecanoate ester + H2O = an aliphatic alcohol + hexadecanoate + H(+). With respect to regulation, acylglycerol lipase activity is activated upon binding to progesterone. Its function is as follows. Progesterone-dependent acylglycerol lipase that catalyzes hydrolysis of endocannabinoid arachidonoylglycerol (AG) from cell membrane. Acts as a progesterone receptor: progesterone-binding activates the acylglycerol lipase activity, mediating degradation of 1-arachidonoylglycerol (1AG) and 2-arachidonoylglycerol (2AG) to glycerol and arachidonic acid (AA). Also displays an ester hydrolase activity against acetyl ester, butanoate ester and hexadecanoate ester. Plays a key role in sperm capacitation in response to progesterone by mediating degradation of 2AG, an inhibitor of the sperm calcium channel CatSper, leading to calcium influx via CatSper and sperm activation. May also play a role in smooth muscle cells migration. The sequence is that of Monoacylglycerol lipase ABHD2 (abhd2b) from Danio rerio (Zebrafish).